The following is a 262-amino-acid chain: Small ribosomal subunit protein eS4 (262 aa).

The 64-residue stretch at 42-105 (LPLIIMLRNR…GEFFRLLYDV (64 aa)) folds into the S4 RNA-binding domain.

The protein belongs to the eukaryotic ribosomal protein eS4 family.

This chain is Small ribosomal subunit protein eS4 (RpS4), found in Ixodes scapularis (Black-legged tick).